A 553-amino-acid polypeptide reads, in one-letter code: Formate--tetrahydrofolate ligase (553 aa).

64–71 (TPAGEGKT) is a binding site for ATP.

This sequence belongs to the formate--tetrahydrofolate ligase family.

It catalyses the reaction (6S)-5,6,7,8-tetrahydrofolate + formate + ATP = (6R)-10-formyltetrahydrofolate + ADP + phosphate. It functions in the pathway one-carbon metabolism; tetrahydrofolate interconversion. In Pseudothermotoga lettingae (strain ATCC BAA-301 / DSM 14385 / NBRC 107922 / TMO) (Thermotoga lettingae), this protein is Formate--tetrahydrofolate ligase.